An 890-amino-acid chain; its full sequence is Kinesin-like protein KIN-7C, mitochondrial (890 aa).

Residues 1–13 show a composition bias toward polar residues; that stretch reads MSATRSQRSSTIS. A disordered region spans residues 1–66; that stretch reads MSATRSQRSS…TSSAAASSTA (66 aa). A mitochondrion-targeting transit peptide spans 1–73; sequence MSATRSQRSS…STAVASTKLK (73 aa). Residues 40 to 66 show a composition bias toward low complexity; that stretch reads SPVTSSSPLLRSSPSPSTSSAAASSTA. The Kinesin motor domain maps to 75–394; that stretch reads NITVTIRFRP…LKFAQRCKHV (320 aa). 155–162 is an ATP binding site; that stretch reads GVTSSGKT. A coiled-coil region spans residues 395–468; the sequence is EIKASRNKIM…MGRIQRLTKL (74 aa). The tract at residues 511-595 is disordered; it reads DGAVSTVSEH…TTRRENAAAI (85 aa). Residues 569–579 are compositionally biased toward low complexity; it reads SQASGSPSSSS. 2 coiled-coil regions span residues 664-693 and 729-765; these read HIRDQIQKLEDEISEKKDQIRVLEQQIIEI and ADNRILQEQLQMTKSENAEMQETIILLRQQLDSLAER. Residues 768–797 form a disordered region; the sequence is TQQIAGDESSGKNIHNRNGEESEIYSGAGT. Positions 818–884 form a coiled coil; sequence NETALNSQAL…AEEVTRLCNE (67 aa).

It belongs to the TRAFAC class myosin-kinesin ATPase superfamily. Kinesin family. KIN-7 subfamily.

The protein localises to the mitochondrion. The protein is Kinesin-like protein KIN-7C, mitochondrial of Arabidopsis thaliana (Mouse-ear cress).